A 501-amino-acid chain; its full sequence is Glucose-6-phosphate exchanger SLC37A2 (501 aa).

The helical transmembrane segment at 19–39 (SWFRGFILLLTFLIYACYHMS) threads the bilayer. Asparagine 53, asparagine 62, and asparagine 68 each carry an N-linked (GlcNAc...) asparagine glycan. Transmembrane regions (helical) follow at residues 88 to 108 (GAVDNAFLVAYAIGMFISGIF), 118 to 140 (LSAGMVLSGLFTSLFGLGYFWNI), 142 to 164 (MLWYFVLIQICNGLVQTTGWPSV), 179 to 199 (FIMGIWNSHTSVGNILGSLIA), and 210 to 230 (SFIVPGIITAIMGVITFLFLI). The segment covering 240 to 252 (PPRHHDDPEKEQD) has biased composition (basic and acidic residues). The interval 240 to 266 (PPRHHDDPEKEQDNPEDPVNSPYSSRE) is disordered. Transmembrane regions (helical) follow at residues 303 to 323 (CLLFAKLVSYTFLYWLPLYIF), 334 to 354 (GDLSTLFDVGGIIGGIMAGLI), 362 to 382 (ATTCCIMLILAAPMMFLYNYI), 391 to 411 (IVMLIICGVLVNGPYALITTA), 434 to 454 (AIIDGTGSIGAALGPLLAGLI), and 462 to 482 (VFYMLISADVLACLLLCRLVY).

It belongs to the major facilitator superfamily. Organophosphate:Pi antiporter (OPA) (TC 2.A.1.4) family. In terms of tissue distribution, highly expressed in bone marrow derived macrophages, and weakly in spleen.

It is found in the endoplasmic reticulum membrane. It carries out the reaction D-glucose 6-phosphate(in) + phosphate(out) = D-glucose 6-phosphate(out) + phosphate(in). Its activity is regulated as follows. Inhibited by vanadate but not by chlorogenic acid. Its function is as follows. Inorganic phosphate and glucose-6-phosphate antiporter. May transport cytoplasmic glucose-6-phosphate into the lumen of the endoplasmic reticulum and translocate inorganic phosphate into the opposite direction. Independent of a lumenal glucose-6-phosphatase. May not play a role in homeostatic regulation of blood glucose levels. This is Glucose-6-phosphate exchanger SLC37A2 from Mus musculus (Mouse).